The primary structure comprises 418 residues: Tyrosine--tRNA ligase (418 aa).

Tyr-34 provides a ligand contact to L-tyrosine. The 'HIGH' region signature appears at 39–48 (PTADSLHLGH). The L-tyrosine site is built by Tyr-169 and Gln-173. The 'KMSKS' region motif lies at 229-233 (KFGKS). Lys-232 contributes to the ATP binding site. The 67-residue stretch at 352-418 (LNLVDMLVTA…GKKKYAVLTY (67 aa)) folds into the S4 RNA-binding domain.

It belongs to the class-I aminoacyl-tRNA synthetase family. TyrS type 1 subfamily. Homodimer.

Its subcellular location is the cytoplasm. The catalysed reaction is tRNA(Tyr) + L-tyrosine + ATP = L-tyrosyl-tRNA(Tyr) + AMP + diphosphate + H(+). In terms of biological role, catalyzes the attachment of tyrosine to tRNA(Tyr) in a two-step reaction: tyrosine is first activated by ATP to form Tyr-AMP and then transferred to the acceptor end of tRNA(Tyr). This Streptococcus pyogenes serotype M12 (strain MGAS2096) protein is Tyrosine--tRNA ligase.